The sequence spans 464 residues: NADH dehydrogenase [ubiquinone] flavoprotein 1, mitochondrial (464 aa).

The transit peptide at methionine 1–phenylalanine 20 directs the protein to the mitochondrion. Position 81 is an N6-acetyllysine; alternate (lysine 81). Lysine 81 carries the N6-succinyllysine; alternate modification. Glycine 87–glycine 96 is an NADH binding site. Lysine 104 carries the N6-acetyllysine modification. Arginine 199 to threonine 247 lines the FMN pocket. Arginine 257 carries the post-translational modification Omega-N-methylarginine. At lysine 375 the chain carries N6-acetyllysine. The [4Fe-4S] cluster site is built by cysteine 379, cysteine 382, cysteine 385, and cysteine 425.

It belongs to the complex I 51 kDa subunit family. Core subunit of respiratory chain NADH dehydrogenase (Complex I) which is composed of 45 different subunits. This is a component of the flavoprotein-sulfur (FP) fragment of the enzyme. Interacts with RAB5IF. FMN is required as a cofactor. The cofactor is [4Fe-4S] cluster.

The protein localises to the mitochondrion inner membrane. The enzyme catalyses a ubiquinone + NADH + 5 H(+)(in) = a ubiquinol + NAD(+) + 4 H(+)(out). Its function is as follows. Core subunit of the mitochondrial membrane respiratory chain NADH dehydrogenase (Complex I) which catalyzes electron transfer from NADH through the respiratory chain, using ubiquinone as an electron acceptor. Part of the peripheral arm of the enzyme, where the electrons from NADH are accepted by flavin mononucleotide (FMN) and then passed along a chain of iron-sulfur clusters by electron tunnelling to the final acceptor ubiquinone. Contains FMN, which is the initial electron acceptor as well as one iron-sulfur cluster. The chain is NADH dehydrogenase [ubiquinone] flavoprotein 1, mitochondrial from Macaca fascicularis (Crab-eating macaque).